The chain runs to 103 residues: Large ribosomal subunit protein bL21 (103 aa).

Belongs to the bacterial ribosomal protein bL21 family. As to quaternary structure, part of the 50S ribosomal subunit. Contacts protein L20.

In terms of biological role, this protein binds to 23S rRNA in the presence of protein L20. This Polaromonas sp. (strain JS666 / ATCC BAA-500) protein is Large ribosomal subunit protein bL21.